Here is a 196-residue protein sequence, read N- to C-terminus: Peptide deformylase (196 aa).

2 residues coordinate Fe cation: Cys-103 and His-145. Residue Glu-146 is part of the active site. A Fe cation-binding site is contributed by His-149.

This sequence belongs to the polypeptide deformylase family. Fe(2+) serves as cofactor.

The enzyme catalyses N-terminal N-formyl-L-methionyl-[peptide] + H2O = N-terminal L-methionyl-[peptide] + formate. Its function is as follows. Removes the formyl group from the N-terminal Met of newly synthesized proteins. Requires at least a dipeptide for an efficient rate of reaction. N-terminal L-methionine is a prerequisite for activity but the enzyme has broad specificity at other positions. The chain is Peptide deformylase from Rhodococcus opacus (strain B4).